A 425-amino-acid polypeptide reads, in one-letter code: Glutamyl-tRNA reductase (425 aa).

Substrate is bound by residues 49-52, S107, 112-114, and Q118; these read TCNR and EPQ. C50 functions as the Nucleophile in the catalytic mechanism. 187–192 is an NADP(+) binding site; it reads GAGETI.

The protein belongs to the glutamyl-tRNA reductase family. As to quaternary structure, homodimer.

It catalyses the reaction (S)-4-amino-5-oxopentanoate + tRNA(Glu) + NADP(+) = L-glutamyl-tRNA(Glu) + NADPH + H(+). It functions in the pathway porphyrin-containing compound metabolism; protoporphyrin-IX biosynthesis; 5-aminolevulinate from L-glutamyl-tRNA(Glu): step 1/2. Its function is as follows. Catalyzes the NADPH-dependent reduction of glutamyl-tRNA(Glu) to glutamate 1-semialdehyde (GSA). The chain is Glutamyl-tRNA reductase from Pseudomonas putida (strain ATCC 47054 / DSM 6125 / CFBP 8728 / NCIMB 11950 / KT2440).